A 106-amino-acid polypeptide reads, in one-letter code: MSTEKVAFRMFLIPGCAAEYQRRHAAIWPELSALLRAAGVSDYSIYLDQEHHVLFATLRRSRAHGMDALPAHPVMRRWWAHMADIMRYGTDGTPIVEPLPCMFHMD.

Position 20 (Tyr-20) interacts with substrate. Catalysis depends on His-24, which acts as the Proton donor. Residues Tyr-43 and 78 to 79 (WW) contribute to the substrate site.

The protein belongs to the rhamnose mutarotase family. In terms of assembly, homodimer.

Its subcellular location is the cytoplasm. It catalyses the reaction alpha-L-rhamnose = beta-L-rhamnose. It participates in carbohydrate metabolism; L-rhamnose metabolism. In terms of biological role, involved in the anomeric conversion of L-rhamnose. The sequence is that of L-rhamnose mutarotase from Verminephrobacter eiseniae (strain EF01-2).